A 351-amino-acid polypeptide reads, in one-letter code: Lipopolysaccharide core biosynthesis mannosyltransferase LpsB (351 aa).

Belongs to the glycosyltransferase group 1 family. Glycosyltransferase 4 subfamily.

Its pathway is bacterial outer membrane biogenesis; LPS core biosynthesis. In terms of biological role, acts at transfer of mannose group to a 3-deoxy-D-mono octulonic acid (KDO) via an alpha-1,5 linkage. This chain is Lipopolysaccharide core biosynthesis mannosyltransferase LpsB (lpsB), found in Rhizobium meliloti (strain 1021) (Ensifer meliloti).